Reading from the N-terminus, the 548-residue chain is Acetylcholine receptor subunit alpha-type des-2 (548 aa).

An N-terminal signal peptide occupies residues 1–19 (MLIIIQSLLLATTASLCIA). The Extracellular portion of the chain corresponds to 21–239 (TPVPTQIRLV…LTLYLRRKPL (219 aa)). Residues asparagine 52, asparagine 96, and asparagine 224 are each glycosylated (N-linked (GlcNAc...) asparagine). 3 consecutive transmembrane segments (helical) span residues 240-260 (FYLV…IVGF), 274-294 (VSLG…VSDQ), and 301-321 (FIPL…LGTV). The disordered stretch occupies residues 422–460 (LIHLSPTAHQPDESISPSAPPVPSSSPLPPPLTPGPADD). Positions 439 to 455 (SAPPVPSSSPLPPPLTP) are enriched in pro residues. A helical transmembrane segment spans residues 517-537 (FVIFVVAFLIITFGINFIGFI). Residues 538–548 (HWHQAGVEYGG) lie on the Cytoplasmic side of the membrane.

Belongs to the ligand-gated ion channel (TC 1.A.9) family. Acetylcholine receptor (TC 1.A.9.1) subfamily. As to quaternary structure, the functional receptor is a heteromer of deg-3 and des-2. Interacts with ric-3; which is required for proper receptor folding.

The protein localises to the cell membrane. Functionally, subunit of the non-synaptic neuronal acetylcholine receptor (AChR), which may play a role in chemotaxis towards choline. After binding choline or acetylcholine, the AChR responds by an extensive change in conformation that affects all subunits and leads to opening of an ion-conducting channel across the plasma membrane. This chain is Acetylcholine receptor subunit alpha-type des-2 (des-2), found in Caenorhabditis elegans.